A 314-amino-acid chain; its full sequence is Cytochrome b558/566 subunit B (314 aa).

8 helical membrane-spanning segments follow: residues 47–67, 76–96, 102–122, 127–147, 155–175, 186–206, 233–253, and 264–284; these read LLLV…LIVS, SLIP…IPNY, LYSL…EGLI, LSIL…ASIL, LFIS…AYVI, YIAI…ENII, HITL…TSLI, and FLII…IYML.

It localises to the cell membrane. The sequence is that of Cytochrome b558/566 subunit B (cbsB) from Saccharolobus solfataricus (strain ATCC 35092 / DSM 1617 / JCM 11322 / P2) (Sulfolobus solfataricus).